The chain runs to 576 residues: K(+)/H(+) antiporter NhaP2 (576 aa).

Helical transmembrane passes span 6 to 26 (INSF…LSPM), 34 to 54 (ILLI…GGIL), 58 to 78 (YSTA…DGGM), 87 to 107 (VALW…TSIT), 109 to 129 (MMAA…GAIV), 163 to 183 (PMAV…DTEM), 185 to 205 (FSFM…LGLG), 219 to 239 (LADG…YAAS), 242 to 262 (LGGS…NKPT), 271 to 291 (VLDG…GLLL), 299 to 319 (ILIP…PVAV), 335 to 355 (WFIS…VFPM), and 359 to 379 (LPGA…SLLV). The region spanning 405 to 486 (SGVEIYPSSE…LEALSNLFSQ (82 aa)) is the RCK C-terminal domain.

This sequence belongs to the monovalent cation:proton antiporter 1 (CPA1) transporter (TC 2.A.36) family. NhaP2 subfamily.

Its subcellular location is the cell inner membrane. The enzyme catalyses K(+)(in) + H(+)(out) = K(+)(out) + H(+)(in). In terms of biological role, k(+)/H(+) antiporter that extrudes potassium in exchange for external protons and maintains the internal concentration of potassium under toxic levels. This chain is K(+)/H(+) antiporter NhaP2, found in Shewanella baltica (strain OS223).